Reading from the N-terminus, the 413-residue chain is RING-H2 finger protein ATL54 (413 aa).

The chain crosses the membrane as a helical span at residues 83-103 (ISIITITGAVLAILLTGFFLV). The RING-type; atypical zinc finger occupies 177-219 (CPVCLNEFEEDESLRLLPKCNHAFHISCIDTWLSSHTNCPLCR). Disordered stretches follow at residues 238–258 (VTPG…EDHG) and 321–413 (THVE…VFPL). Positions 387–401 (SSSTLKTNGSSSSVS) are enriched in low complexity. Residues 402 to 413 (CFNKNKSSVFPL) are compositionally biased toward polar residues.

The protein belongs to the RING-type zinc finger family. ATL subfamily.

Its subcellular location is the membrane. The enzyme catalyses S-ubiquitinyl-[E2 ubiquitin-conjugating enzyme]-L-cysteine + [acceptor protein]-L-lysine = [E2 ubiquitin-conjugating enzyme]-L-cysteine + N(6)-ubiquitinyl-[acceptor protein]-L-lysine.. The protein operates within protein modification; protein ubiquitination. This Arabidopsis thaliana (Mouse-ear cress) protein is RING-H2 finger protein ATL54 (ATL54).